The chain runs to 84 residues: U8-theraphotoxin-Hhn1e (84 aa).

An N-terminal signal peptide occupies residues 1–21 (MKVVLLVCLVWMMAMMELVSC). Disulfide bonds link cysteine 23/cysteine 35, cysteine 29/cysteine 44, cysteine 34/cysteine 67, cysteine 54/cysteine 75, and cysteine 69/cysteine 81.

This sequence belongs to the AVIT (prokineticin) family. In terms of tissue distribution, expressed by the venom gland.

Its subcellular location is the secreted. The chain is U8-theraphotoxin-Hhn1e from Cyriopagopus hainanus (Chinese bird spider).